The chain runs to 395 residues: E3 ubiquitin-protein ligase NHLRC1 (395 aa).

An RING-type zinc finger spans residues 26-72 (CKVCFEKFGHRQQRRPRNLSCGHVVCLACVAALAHPRTLALECPFCR). NHL repeat units follow at residues 113-157 (ALTC…FDSG), 161-204 (AHQF…FDFF), 205-245 (GQIK…LDVD), 248-300 (EGVL…FSSS), 301-349 (MQLV…LGKP), and 350-393 (EEFP…YKVD).

Interacts with AGL. Interacts (via the NHL repeats) with EPM2A/laforin. Forms a complex with EPM2A/laforin and HSP70. Interacts with PRDM8. In terms of tissue distribution, expressed in brain, cerebellum, spinal cord, medulla, heart, liver, skeletal muscle and pancreas.

It is found in the endoplasmic reticulum. The protein localises to the nucleus. The catalysed reaction is S-ubiquitinyl-[E2 ubiquitin-conjugating enzyme]-L-cysteine + [acceptor protein]-L-lysine = [E2 ubiquitin-conjugating enzyme]-L-cysteine + N(6)-ubiquitinyl-[acceptor protein]-L-lysine.. The protein operates within protein modification; protein ubiquitination. Functionally, E3 ubiquitin-protein ligase. Together with the phosphatase EPM2A/laforin, appears to be involved in the clearance of toxic polyglucosan and protein aggregates via multiple pathways. In complex with EPM2A/laforin and HSP70, suppresses the cellular toxicity of misfolded proteins by promoting their degradation through the ubiquitin-proteasome system (UPS). Ubiquitinates the glycogen-targeting protein phosphatase subunits PPP1R3C/PTG and PPP1R3D in a laforin-dependent manner and targets them for proteasome-dependent degradation, thus decreasing glycogen accumulation. Polyubiquitinates EPM2A/laforin and ubiquitinates AGL and targets them for proteasome-dependent degradation. Also promotes proteasome-independent protein degradation through the macroautophagy pathway. This chain is E3 ubiquitin-protein ligase NHLRC1 (NHLRC1), found in Homo sapiens (Human).